The sequence spans 47 residues: Sperm protamine P1 (47 aa).

The protein belongs to the protamine P1 family. As to expression, testis.

It localises to the nucleus. It is found in the chromosome. Its function is as follows. Protamines substitute for histones in the chromatin of sperm during the haploid phase of spermatogenesis. They compact sperm DNA into a highly condensed, stable and inactive complex. The protein is Sperm protamine P1 (PRM1) of Galeopterus variegatus (Malayan flying lemur).